A 35-amino-acid chain; its full sequence is Hemocyanin A chain (35 aa).

The protein belongs to the tyrosinase family. Hemocyanin subfamily. In terms of tissue distribution, hemolymph.

The protein resides in the secreted. It is found in the extracellular space. In terms of biological role, hemocyanins are copper-containing oxygen carriers occurring freely dissolved in the hemolymph of many mollusks and arthropods. The sequence is that of Hemocyanin A chain from Cherax destructor (Common yabby crayfish).